Here is a 317-residue protein sequence, read N- to C-terminus: MNAKIVNTLNQPPIAGPFLVFNRLQWAELRKSVPLTLTEQDLKPLLGINEELSLDEVSTIYLPLVRLINYYIEENLRRQTVLNRFLGGQHPKVPYIISIAGSVAVGKSTSARILQSLLANWPQARKVDLITTDGFLYPLADLQEKNLLQKKGFPVSYDTPKLIQFLADIKSGKPHVKAPIYSHLTYDIIPNRFNLVNQPDILILEGLNVLQTGNKAKTFVSDFVDFSVYVDADEALLREWYIRRFLKFRQSAFNNPHSYFKHYASLSEQDAINTATNIWDTINGLNLKQNILPTRERANLILHKGADHAVQEVKLRK.

Residue 101–108 coordinates ATP; sequence GSVAVGKS.

This sequence belongs to the prokaryotic pantothenate kinase family.

The protein localises to the cytoplasm. The enzyme catalyses (R)-pantothenate + ATP = (R)-4'-phosphopantothenate + ADP + H(+). It functions in the pathway cofactor biosynthesis; coenzyme A biosynthesis; CoA from (R)-pantothenate: step 1/5. This is Pantothenate kinase from Actinobacillus succinogenes (strain ATCC 55618 / DSM 22257 / CCUG 43843 / 130Z).